The primary structure comprises 433 residues: Glutamate-1-semialdehyde 2,1-aminomutase (433 aa).

Lys273 is modified (N6-(pyridoxal phosphate)lysine).

Belongs to the class-III pyridoxal-phosphate-dependent aminotransferase family. HemL subfamily. As to quaternary structure, homodimer. Pyridoxal 5'-phosphate serves as cofactor.

It localises to the cytoplasm. The catalysed reaction is (S)-4-amino-5-oxopentanoate = 5-aminolevulinate. Its pathway is porphyrin-containing compound metabolism; protoporphyrin-IX biosynthesis; 5-aminolevulinate from L-glutamyl-tRNA(Glu): step 2/2. It participates in porphyrin-containing compound metabolism; chlorophyll biosynthesis. In Crocosphaera subtropica (strain ATCC 51142 / BH68) (Cyanothece sp. (strain ATCC 51142)), this protein is Glutamate-1-semialdehyde 2,1-aminomutase.